We begin with the raw amino-acid sequence, 207 residues long: Sodium/potassium-transporting ATPase subunit beta-1-interacting protein 1 (207 aa).

The first 21 residues, 1–21 (MGKCSGRCTLVAFCCLQLVAA), serve as a signal peptide directing secretion. The Extracellular portion of the chain corresponds to 22–34 (LERQIFDFLGYQW). Residues 35 to 55 (APILANFLHIMAVILGIFGTV) traverse the membrane as a helical segment. At 56–61 (QYRSRY) the chain is on the cytoplasmic side. A helical transmembrane segment spans residues 62–82 (LILYAAWLVLWVGWNAFIICF). Residues 83-146 (YLEVGQLSQD…GCLLDYPYIE (64 aa)) are Extracellular-facing. A glycan (N-linked (GlcNAc...) asparagine) is linked at N100. Residues 147–167 (ALSSALQIFLALFGFVFACYV) form a helical membrane-spanning segment. Topologically, residues 168 to 207 (SKVFLEEEDSFDFIGGFDSYGYQAPQKTSHLQLQPLYTSG) are cytoplasmic.

Belongs to the NKAIN family. As to quaternary structure, interacts with ATP1B1 C-terminus.

The protein resides in the cell membrane. The chain is Sodium/potassium-transporting ATPase subunit beta-1-interacting protein 1 (NKAIN1) from Homo sapiens (Human).